We begin with the raw amino-acid sequence, 686 residues long: Envelope glycoprotein H (686 aa).

The N-terminal stretch at 1 to 24 (MPASSVRLPLRLLTLAGLLALAGA) is a signal peptide. Over 25–646 (AALARGAPQG…TSTRLAPVSP (622 aa)) the chain is Virion surface. 5 N-linked (GlcNAc...) asparagine; by host glycosylation sites follow: asparagine 77, asparagine 162, asparagine 542, asparagine 604, and asparagine 627. An interaction with gL region spans residues 157–217 (PAAVFNVTLG…PPAGRFHVYT (61 aa)). The helical transmembrane segment at 647 to 667 (AYVVASVVGAAITVGILYALF) threads the bilayer. Residues 668-686 (KMLCSFSSEGYSRLINARS) are Intravirion-facing.

It belongs to the herpesviridae glycoprotein H family. Interacts with glycoprotein L (gL); this interaction is necessary for the correct processing and cell surface expression of gH. The heterodimer gH/gL seems to interact with gB trimers during fusion. N-glycosylated, O-glycosylated, and sialylated.

The protein resides in the virion membrane. It is found in the host cell membrane. It localises to the host endosome membrane. In terms of biological role, the heterodimer glycoprotein H-glycoprotein L is required for the fusion of viral and plasma membranes leading to virus entry into the host cell. Following initial binding to host receptor, membrane fusion is mediated by the fusion machinery composed of gB and the heterodimer gH/gL. May also be involved in the fusion between the virion envelope and the outer nuclear membrane during virion morphogenesis. In Suid herpesvirus 1 (strain Rice) (SuHV-1), this protein is Envelope glycoprotein H.